The primary structure comprises 168 residues: MPACRLCLLATGLLLGLLLFTPLSATGTRAEKPGVCPQLEPITDCVKACILDNDCQDNYKCCQAGCGSVCSKPNGLSEGKLSRTATGTTTLSAGLARTSPLSRGQVSTKPPVVTKEGGNGEKQGTCPSVDFPKLGLCEDQCQMDSQCSGNMKCCRNGCGKMGCTTPKF.

The first 30 residues, 1 to 30 (MPACRLCLLATGLLLGLLLFTPLSATGTRA), serve as a signal peptide directing secretion. 2 consecutive WAP domains span residues 31 to 74 (EKPG…SKPN) and 119 to 167 (NGEK…TTPK). Disulfide bonds link C36-C62, C45-C66, C49-C61, and C55-C70. Residues 100 to 123 (PLSRGQVSTKPPVVTKEGGNGEKQ) are disordered. Intrachain disulfides connect C126–C154, C137–C158, C141–C153, and C147–C163.

As to quaternary structure, homotrimer; disulfide-linked.

Its subcellular location is the secreted. Broad range protease inhibitor. This Rattus norvegicus (Rat) protein is WAP four-disulfide core domain protein 2 (Wfdc2).